We begin with the raw amino-acid sequence, 230 residues long: Cytidylate kinase (230 aa).

ATP is bound at residue 12-20 (GPSGAGKGT).

This sequence belongs to the cytidylate kinase family. Type 1 subfamily.

It localises to the cytoplasm. The enzyme catalyses CMP + ATP = CDP + ADP. The catalysed reaction is dCMP + ATP = dCDP + ADP. The polypeptide is Cytidylate kinase (Shewanella sediminis (strain HAW-EB3)).